A 150-amino-acid chain; its full sequence is Phosphoribosyl-AMP cyclohydrolase (150 aa).

Asp-93 contacts Mg(2+). Cys-94 serves as a coordination point for Zn(2+). The Mg(2+) site is built by Asp-95 and Asp-97. Residues Cys-112 and Cys-119 each coordinate Zn(2+).

Belongs to the PRA-CH family. In terms of assembly, homodimer. It depends on Mg(2+) as a cofactor. The cofactor is Zn(2+).

The protein resides in the cytoplasm. The catalysed reaction is 1-(5-phospho-beta-D-ribosyl)-5'-AMP + H2O = 1-(5-phospho-beta-D-ribosyl)-5-[(5-phospho-beta-D-ribosylamino)methylideneamino]imidazole-4-carboxamide. It participates in amino-acid biosynthesis; L-histidine biosynthesis; L-histidine from 5-phospho-alpha-D-ribose 1-diphosphate: step 3/9. Its function is as follows. Catalyzes the hydrolysis of the adenine ring of phosphoribosyl-AMP. This is Phosphoribosyl-AMP cyclohydrolase from Rhizobium leguminosarum bv. trifolii (strain WSM2304).